Here is a 135-residue protein sequence, read N- to C-terminus: NADH-quinone oxidoreductase subunit A (135 aa).

The next 3 helical transmembrane spans lie at 9–29 (YFPI…LLTV), 67–87 (VGML…WVVV), and 97–117 (LFGF…FFYI).

This sequence belongs to the complex I subunit 3 family. NDH-1 is composed of 14 different subunits. Subunits NuoA, H, J, K, L, M, N constitute the membrane sector of the complex.

It localises to the cell inner membrane. It catalyses the reaction a quinone + NADH + 5 H(+)(in) = a quinol + NAD(+) + 4 H(+)(out). In terms of biological role, NDH-1 shuttles electrons from NADH, via FMN and iron-sulfur (Fe-S) centers, to quinones in the respiratory chain. The immediate electron acceptor for the enzyme in this species is believed to be ubiquinone. Couples the redox reaction to proton translocation (for every two electrons transferred, four hydrogen ions are translocated across the cytoplasmic membrane), and thus conserves the redox energy in a proton gradient. This is NADH-quinone oxidoreductase subunit A from Solibacter usitatus (strain Ellin6076).